The primary structure comprises 200 residues: Peptidyl-tRNA hydrolase (200 aa).

Residue Tyr-15 coordinates tRNA. His-20 serves as the catalytic Proton acceptor. Phe-66, Asn-68, and Asn-114 together coordinate tRNA.

The protein belongs to the PTH family. As to quaternary structure, monomer.

It is found in the cytoplasm. It carries out the reaction an N-acyl-L-alpha-aminoacyl-tRNA + H2O = an N-acyl-L-amino acid + a tRNA + H(+). Its function is as follows. Hydrolyzes ribosome-free peptidyl-tRNAs (with 1 or more amino acids incorporated), which drop off the ribosome during protein synthesis, or as a result of ribosome stalling. Catalyzes the release of premature peptidyl moieties from peptidyl-tRNA molecules trapped in stalled 50S ribosomal subunits, and thus maintains levels of free tRNAs and 50S ribosomes. In Ralstonia pickettii (strain 12J), this protein is Peptidyl-tRNA hydrolase.